A 581-amino-acid polypeptide reads, in one-letter code: Proline--tRNA ligase (581 aa).

The protein belongs to the class-II aminoacyl-tRNA synthetase family. ProS type 1 subfamily. As to quaternary structure, homodimer.

It localises to the cytoplasm. It catalyses the reaction tRNA(Pro) + L-proline + ATP = L-prolyl-tRNA(Pro) + AMP + diphosphate. Catalyzes the attachment of proline to tRNA(Pro) in a two-step reaction: proline is first activated by ATP to form Pro-AMP and then transferred to the acceptor end of tRNA(Pro). As ProRS can inadvertently accommodate and process non-cognate amino acids such as alanine and cysteine, to avoid such errors it has two additional distinct editing activities against alanine. One activity is designated as 'pretransfer' editing and involves the tRNA(Pro)-independent hydrolysis of activated Ala-AMP. The other activity is designated 'posttransfer' editing and involves deacylation of mischarged Ala-tRNA(Pro). The misacylated Cys-tRNA(Pro) is not edited by ProRS. The polypeptide is Proline--tRNA ligase (Azoarcus sp. (strain BH72)).